The following is a 334-amino-acid chain: Formamidase (334 aa).

The 247-residue stretch at 14–260 (FLVAAIQFPV…WEIVTGEIYP (247 aa)) folds into the CN hydrolase domain. The active-site Proton acceptor is the Glu-60. The active-site Proton donor is Lys-133. The active-site Nucleophile is Cys-166.

It belongs to the carbon-nitrogen hydrolase superfamily. Aliphatic amidase family.

It carries out the reaction formamide + H2O = formate + NH4(+). Its function is as follows. Is an aliphatic amidase with a restricted substrate specificity, as it only hydrolyzes formamide. The protein is Formamidase of Helicobacter pylori (strain Shi470).